A 370-amino-acid polypeptide reads, in one-letter code: Gap junction delta-4 protein (370 aa).

The Cytoplasmic portion of the chain corresponds to 1 to 19 (MEGVDLLGFLIITLNCNVT). The helical transmembrane segment at 20–40 (MVGKLWFVLTMLLRMLVIVLA) threads the bilayer. Over 41–76 (GRPVYQDEQERFVCNTLQPGCANVCYDVFSPVSHLR) the chain is Extracellular. Residues 77–97 (FWLIQGVCVLLPSAVFSVYVL) traverse the membrane as a helical segment. Residues 98–146 (HRGATLAALGPRRCPDPREPASGQRRCPRPFGERGGLQVPDFSAGYIIH) are Cytoplasmic-facing. A helical transmembrane segment spans residues 147 to 167 (LLLRTLLEAAFGALHYFLFGF). Topologically, residues 168–196 (LAPKKFPCTRPPCTGVVDCYVSRPTEKSL) are extracellular. The helical transmembrane segment at 197 to 217 (LMLFLWAVSALSFLLGLADLV) threads the bilayer. Residues 218-370 (CSLRRRMRRR…HLRARKSEWV (153 aa)) are Cytoplasmic-facing. The disordered stretch occupies residues 224-370 (MRRRPGPPTS…HLRARKSEWV (147 aa)). A compositionally biased stretch (basic and acidic residues) spans 246–260 (AEGRRTDEEGGREEE). The segment covering 331–346 (PSAAPSRLAAPPSCSS) has biased composition (low complexity).

Belongs to the connexin family. Delta-type subfamily. In terms of assembly, a connexon is composed of a hexamer of connexins. Expressed in pancreas, kidney, skeletal muscle, liver, placenta, and heart.

The protein resides in the cell membrane. It localises to the cell junction. Its subcellular location is the gap junction. Its function is as follows. One gap junction consists of a cluster of closely packed pairs of transmembrane channels, the connexons, through which materials of low MW diffuse from one cell to a neighboring cell. The polypeptide is Gap junction delta-4 protein (GJD4) (Homo sapiens (Human)).